The sequence spans 137 residues: Large ribosomal subunit protein uL16 (137 aa).

The disordered stretch occupies residues 1–22 (MLQPKRTKFRKVQKGRNRGLAH).

Belongs to the universal ribosomal protein uL16 family. In terms of assembly, part of the 50S ribosomal subunit.

Binds 23S rRNA and is also seen to make contacts with the A and possibly P site tRNAs. This Chromohalobacter salexigens (strain ATCC BAA-138 / DSM 3043 / CIP 106854 / NCIMB 13768 / 1H11) protein is Large ribosomal subunit protein uL16.